The following is a 380-amino-acid chain: MKATILLFLVLAVVQLSTAAEQLKFVFVTVRGADYEVCDIPGGPKITNKDGKDSKLTEEGKNTVYQLGVKVSELYKSKLGVSKWDSSKNYWPIATNSRRSQISTLITGAGLEGDQSKRDKSWTDEELKKTSFPAMLQFWKFIDPAKCPKFFKEVSQQPEIATTLQDCASQMQEVKKHYDTVDPTKPQHVWLTYETLKKMKKQQPSKVEWASDDMMKKLRECSAKLNWLATTKTDTLRKLSGGLILSDILNDMKEITQGKAQPHATGGTSNKLSLFTTPQGLLIAKLAVFMPPGATLDGKVPTSSEVYPESGATMNTEMYEDNGTWKVKLIYYEGKDYPGKTIKLPGCEEKCPFQQFQQILTKYAVNEQEHETLCKSAQWP.

Residues 1 to 19 form the signal peptide; that stretch reads MKATILLFLVLAVVQLSTA. 3 cysteine pairs are disulfide-bonded: cysteine 147-cysteine 374, cysteine 167-cysteine 221, and cysteine 347-cysteine 351.

Belongs to the histidine acid phosphatase family.

The protein localises to the secreted. Probably modulates blood feeding of fleas on vertebrate species by binding and sequestering different mediators involved in the host response. Binds histamine. Binds leukotriene C4. Does not bind serotonin, adrenaline, noradrenaline, leukotriene B4, leukotriene D4, leukotriene E4, ADP, and stable analogs of thromboxane A2: U-46619 and cTXA2. The protein is Acid phosphatase-like protein XcAP-3 of Xenopsylla cheopis (Oriental rat flea).